The primary structure comprises 1103 residues: Bifunctional cytochrome P450/NADPH--P450 reductase (1103 aa).

Positions 1–491 (MSTPKAEPVP…SSSEHADHAA (491 aa)) are cytochrome P450. Position 415 (Cys415) interacts with heme. An NADPH--P450 reductase region spans residues 492 to 1103 (GHGKAGAAKK…KERYTTDIFA (612 aa)). Residues 508–649 (MHVYYGSNTG…DFDTWGETSF (142 aa)) form the Flavodoxin-like domain. Residues 514 to 519 (SNTGTC), 561 to 564 (SYEG), Cys596, and Thr604 each bind FMN. One can recognise an FAD-binding FR-type domain in the interval 685 to 924 (LQLQEGLVVE…RPSHTGFKPP (240 aa)).

It in the N-terminal section; belongs to the cytochrome P450 family. Heme is required as a cofactor. Requires FAD as cofactor. The cofactor is FMN.

The catalysed reaction is 2 oxidized [cytochrome P450] + NADPH = 2 reduced [cytochrome P450] + NADP(+) + H(+). It catalyses the reaction an organic molecule + reduced [NADPH--hemoprotein reductase] + O2 = an alcohol + oxidized [NADPH--hemoprotein reductase] + H2O + H(+). Functionally, functions as a fatty acid monooxygenase. Also displays a NADPH-dependent reductase activity in the C-terminal domain, which allows electron transfer from NADPH to the heme iron of the cytochrome P450 N-terminal domain. This Aspergillus oryzae (strain ATCC 42149 / RIB 40) (Yellow koji mold) protein is Bifunctional cytochrome P450/NADPH--P450 reductase.